A 275-amino-acid chain; its full sequence is Large ribosomal subunit protein uL2 (275 aa).

Residues 224–275 (AMNPVDHPHGGGEGKAPIGHPGPLTPWGKPALGYKTRKKGKASDKFIVKRRK) form a disordered region. Residues 264–275 (KASDKFIVKRRK) show a composition bias toward basic and acidic residues.

The protein belongs to the universal ribosomal protein uL2 family. In terms of assembly, part of the 50S ribosomal subunit. Forms a bridge to the 30S subunit in the 70S ribosome.

Functionally, one of the primary rRNA binding proteins. Required for association of the 30S and 50S subunits to form the 70S ribosome, for tRNA binding and peptide bond formation. It has been suggested to have peptidyltransferase activity; this is somewhat controversial. Makes several contacts with the 16S rRNA in the 70S ribosome. The chain is Large ribosomal subunit protein uL2 from Caldanaerobacter subterraneus subsp. tengcongensis (strain DSM 15242 / JCM 11007 / NBRC 100824 / MB4) (Thermoanaerobacter tengcongensis).